The primary structure comprises 268 residues: Probable intron-encoded DNA endonuclease 1 (268 aa).

It belongs to the LAGLIDADG endonuclease family.

Its subcellular location is the mitochondrion. In terms of biological role, mitochondrial DNA endonuclease involved in intron homing. This chain is Probable intron-encoded DNA endonuclease 1 (hegI1), found in Mycosarcoma maydis (Corn smut fungus).